The chain runs to 934 residues: MSAHDLKLEEIVNPETLRRKLNELADSTDENYTSPTVRKVVLQALKDALVRGRANAEGMLMKDGGGTLCAKRLSFLMDTLIEALFEFATTKAYPMINPSKAENMAIVAVGGYGRGGLAPGSDIDLLFLLPYKQTPWGEQVVEYMLYMLWDMGLKVGHSTRNIDECIRLSREDMTIRTAILDARFLTGNRELFKTLVTRFDEEIVKDTGPEFIQAKLAERDQRHRKAGETRYLVEPNVKEGKGGQRDLHTLFWITKYFYRVKTKEELVKLGVLSRAELKLFNKAEDFLWAVRCHMHFATLKAEERLSFDIQPEIAQRLGYTAHPGQNYVERFMKHYFLVAKDVGDLTRIISAALEEQQAKHVPGFNRIFLTFSRRKRKLSADGDFVSENHRINIARPEVFKEDPVNIIRLFHLADKHGLEFHPEAMQSLTRSLKLINSDLRENPEANKLFLEILTSPRNPELILRRMNESGVLGKFIPDFGKIVAMMQFNMYHHYTVDEHLLRCIAVLSEIEHGELENEHPLSNHLITTVKRDRNLLYVALLLHDIAKGRPEDHSVAGARIARRLGPRLGLTPTETETVEWLVREHLTMSMVAQSRDLNDRKTIIDFADTVQTMERLKLLLILTVCDIKAVGPGVWNGWKGQLLRTLFYETELVLTGGFSELSRADRDHQAREALADRLSDWPKDKRDAYLALHYTNYFLTVSLEDQVRHAHFIREADRNERALATMAKPHTFEAVTEITVLAPDHPRLLSIITGACAAAGANIVDAQIFTTGDGRALDTILISREFDTDDDERRRAERVGKVIEDVLSGKAHLPDVLAKRTKPKRAAKAFKVEPRVEINNTLSNKFTVIEVEGLDRPGLLSELTGLISDLSLDIASAHITTFGEKVIDSFYVTDLVGHKISNATRQGNIRRKLLGVLSGENGSKTNGRSSQAAA.

Positions 1 to 379 (MSAHDLKLEE…TFSRRKRKLS (379 aa)) are uridylyltransferase. Residues 380–736 (ADGDFVSENH…AKPHTFEAVT (357 aa)) are uridylyl-removing. The HD domain maps to 496–613 (VDEHLLRCIA…IDFADTVQTM (118 aa)). 2 ACT domains span residues 737–819 (EITV…VLAK) and 848–931 (VIEV…RSSQ).

Belongs to the GlnD family. Requires Mg(2+) as cofactor.

It catalyses the reaction [protein-PII]-L-tyrosine + UTP = [protein-PII]-uridylyl-L-tyrosine + diphosphate. It carries out the reaction [protein-PII]-uridylyl-L-tyrosine + H2O = [protein-PII]-L-tyrosine + UMP + H(+). With respect to regulation, uridylyltransferase (UTase) activity is inhibited by glutamine, while glutamine activates uridylyl-removing (UR) activity. Modifies, by uridylylation and deuridylylation, the PII regulatory proteins (GlnB and homologs), in response to the nitrogen status of the cell that GlnD senses through the glutamine level. Under low glutamine levels, catalyzes the conversion of the PII proteins and UTP to PII-UMP and PPi, while under higher glutamine levels, GlnD hydrolyzes PII-UMP to PII and UMP (deuridylylation). Thus, controls uridylylation state and activity of the PII proteins, and plays an important role in the regulation of nitrogen assimilation and metabolism. This Brucella anthropi (strain ATCC 49188 / DSM 6882 / CCUG 24695 / JCM 21032 / LMG 3331 / NBRC 15819 / NCTC 12168 / Alc 37) (Ochrobactrum anthropi) protein is Bifunctional uridylyltransferase/uridylyl-removing enzyme.